We begin with the raw amino-acid sequence, 36 residues long: Hemoglobin subunit beta (36 aa).

Residues 1–36 (VCVLAHHFGKEFTPQVQAAYQKVVAGVANALAHKYH) enclose the Globin domain. Position 34 is an N6-acetyllysine (lysine 34).

Belongs to the globin family. Heterotetramer of two alpha chains and two beta chains. In terms of tissue distribution, red blood cells.

In terms of biological role, involved in oxygen transport from the lung to the various peripheral tissues. The chain is Hemoglobin subunit beta (HBB) from Pongo pygmaeus (Bornean orangutan).